Consider the following 651-residue polypeptide: Acetyl-coenzyme A synthetase (651 aa).

CoA contacts are provided by residues 189–192 (RGGK), Thr-311, and Asn-335. Residues 387–389 (GEP), 411–416 (DTWWQT), Asp-500, and Arg-515 each bind ATP. Residue Ser-523 coordinates CoA. Arg-526 contributes to the ATP binding site. Val-537, His-539, and Val-542 together coordinate Mg(2+). Residue Arg-586 participates in CoA binding. Lys-611 bears the N6-acetyllysine mark.

The protein belongs to the ATP-dependent AMP-binding enzyme family. It depends on Mg(2+) as a cofactor. Acetylated. Deacetylation by the SIR2-homolog deacetylase activates the enzyme.

It catalyses the reaction acetate + ATP + CoA = acetyl-CoA + AMP + diphosphate. Catalyzes the conversion of acetate into acetyl-CoA (AcCoA), an essential intermediate at the junction of anabolic and catabolic pathways. AcsA undergoes a two-step reaction. In the first half reaction, AcsA combines acetate with ATP to form acetyl-adenylate (AcAMP) intermediate. In the second half reaction, it can then transfer the acetyl group from AcAMP to the sulfhydryl group of CoA, forming the product AcCoA. This chain is Acetyl-coenzyme A synthetase, found in Brucella melitensis biotype 2 (strain ATCC 23457).